Reading from the N-terminus, the 133-residue chain is Ribonucleases P/MRP protein subunit POP8 (133 aa).

Component of nuclear RNase P and RNase MRP complexes. RNase P consists of an RNA moiety and at least 9 protein subunits including POP1, POP3, POP4, POP5, POP6, POP7, POP8, RPP1 and RPR2. RNase MRP complex consists of an RNA moiety and at least 10 protein subunits including POP1, POP3, POP4, POP5, POP6, POP7, POP8, RMP1, RPP1 and SNM1, many of which are shared with the RNase P complex.

It is found in the nucleus. The enzyme catalyses Endonucleolytic cleavage of RNA, removing 5'-extranucleotides from tRNA precursor.. Its function is as follows. Component of ribonuclease P, a protein complex that generates mature tRNA molecules by cleaving their 5'-ends. Also a component of RNase MRP, which cleaves pre-rRNA sequences. The protein is Ribonucleases P/MRP protein subunit POP8 (POP8) of Saccharomyces cerevisiae (strain ATCC 204508 / S288c) (Baker's yeast).